The sequence spans 458 residues: MKTDTIAAIATGLSNAGISIVRISGDQAFAVIDKIFQTKSKAKRLSEMDSHTVHYGYIVDEEEIIDEVMVIIMRAPRSYTMEDSIEIDCHGGITVTKKVLEAVLKAGARIAEPGEFTKRAFLNGRIDLSQAEAVIDVIHANNELALKNSMKQLKGNVLHKVKDVRHSIILDTAYIEAALDDPEHISLEGFSDKLRDNVIGSIKELSELINTSENGRMIKEGIRTVILGRPNAGKSSLLNLMVGEERAIVTEIAGTTRDTIEETVFLNGLCLNLIDTAGIRETSDLVEKLGVEKSLKSAKEADLIICVIDASTPLNQDDKEILEFIKDRKAIVLLNKSDLDSVIEEEKINLLTNKPILKISAIDQTGIKDLEQTITEMFFEGNISFNDEIYITNMRHKNALVEAKVSLEQVIVSIENEMPEDFFSIDLMNAYEILGTIIGESVDEDLVNTIFKEFCMGK.

(6S)-5-formyl-5,6,7,8-tetrahydrofolate contacts are provided by R22, E86, and R125. The TrmE-type G domain maps to G221 to F379. N231 contributes to the K(+) binding site. GTP is bound by residues N231–S236, T250–T256, and D275–G278. S235 contributes to the Mg(2+) binding site. Positions 250, 252, and 255 each coordinate K(+). T256 serves as a coordination point for Mg(2+). K458 serves as a coordination point for (6S)-5-formyl-5,6,7,8-tetrahydrofolate.

It belongs to the TRAFAC class TrmE-Era-EngA-EngB-Septin-like GTPase superfamily. TrmE GTPase family. Homodimer. Heterotetramer of two MnmE and two MnmG subunits. It depends on K(+) as a cofactor.

It localises to the cytoplasm. Its function is as follows. Exhibits a very high intrinsic GTPase hydrolysis rate. Involved in the addition of a carboxymethylaminomethyl (cmnm) group at the wobble position (U34) of certain tRNAs, forming tRNA-cmnm(5)s(2)U34. The chain is tRNA modification GTPase MnmE from Lachnoclostridium phytofermentans (strain ATCC 700394 / DSM 18823 / ISDg) (Clostridium phytofermentans).